Here is a 310-residue protein sequence, read N- to C-terminus: D-apiose import binding protein (310 aa).

The first 21 residues, 1–21, serve as a signal peptide directing secretion; that stretch reads MKLLKASLVALSLAASTFVYA. D-apiofuranose-binding positions include Asn35, 111–112, 158–160, Arg164, Asn214, Asp239, and Gln260; these read DR and DTN.

It belongs to the bacterial solute-binding protein 2 family.

The protein resides in the periplasm. Its function is as follows. Part of an ABC transporter complex involved in D-apiose import. Binds D-apiose, D-ribose and D-ribulose. This Actinobacillus succinogenes (strain ATCC 55618 / DSM 22257 / CCUG 43843 / 130Z) protein is D-apiose import binding protein.